We begin with the raw amino-acid sequence, 522 residues long: Glucose-1-phosphate adenylyltransferase large subunit, chloroplastic/amyloplastic (522 aa).

A chloroplast-targeting transit peptide spans Met-1–Cys-62. Positions Ser-28 to Glu-42 are enriched in basic and acidic residues. The segment at Ser-28–Gly-54 is disordered.

It belongs to the bacterial/plant glucose-1-phosphate adenylyltransferase family. As to quaternary structure, heterotetramer. As to expression, abundantly expressed in the whole grains, a slightly less abundant expression is seen in leaves, while a low level expression is seen in the roots. A greater expression is seen in the endosperm than in the embryo and pericarp layers.

The protein localises to the plastid. It localises to the chloroplast. It is found in the amyloplast. The catalysed reaction is alpha-D-glucose 1-phosphate + ATP + H(+) = ADP-alpha-D-glucose + diphosphate. It participates in glycan biosynthesis; starch biosynthesis. With respect to regulation, insensitive to 3'phosphoglycerate and orthophosphate. In terms of biological role, this protein plays a role in synthesis of starch. It catalyzes the synthesis of the activated glycosyl donor, ADP-glucose from Glc-1-P and ATP. This is Glucose-1-phosphate adenylyltransferase large subunit, chloroplastic/amyloplastic (AGP-L) from Triticum aestivum (Wheat).